The chain runs to 300 residues: Cutinase est2 (300 aa).

The signal sequence occupies residues 1 to 39 (MSVTTPRRETSLLSRALRATAAAATAVVATVALAAPAQA). Y99 contributes to the poly(ethylene terephthalate) binding site. S169 (nucleophile) is an active-site residue. The poly(ethylene terephthalate) site is built by M170 and W194. Position 213 (E213) interacts with Ca(2+). D215 acts as the Charge relay system in catalysis. D243 serves as a coordination point for Ca(2+). The Charge relay system role is filled by H247. C280 and C298 are disulfide-bonded. E292 contacts Ca(2+).

The protein belongs to the AB hydrolase superfamily. In terms of assembly, monomer. Ca(2+) is required as a cofactor.

Its subcellular location is the secreted. It localises to the periplasm. The enzyme catalyses an acetyl ester + H2O = an aliphatic alcohol + acetate + H(+). It catalyses the reaction (ethylene terephthalate)(n) + H2O = (ethylene terephthalate)(n-1) + 4-[(2-hydroxyethoxy)carbonyl]benzoate + H(+). It carries out the reaction a butanoate ester + H2O = an aliphatic alcohol + butanoate + H(+). The catalysed reaction is cutin + H2O = cutin monomers.. The enzyme catalyses a hexanoate ester + H2O = an aliphatic alcohol + hexanoate + H(+). It catalyses the reaction an octanoate ester + H2O = an aliphatic alcohol + octanoate + H(+). Activated by calcium ions. Activated by magnesium ions. Activated by manganese ions. Inhibited by the serine hydrolase inhibitor phenylmethanesulfonyl fluoride (PMSF). Inhibited by the chelator ethylenediaminetetraacetic acid (EDTA). Inhibited by iron ions. Inhibited by aluminum ions. Inhibited by rubidium ions. Inhibited by lithium ions. In terms of biological role, catalyzes the hydrolysis of cutin, a polyester that forms the structure of plant cuticle. Shows esterase activity towards p-nitrophenol-linked aliphatic esters (pNP-aliphatic esters). Capable of degrading the plastic poly(ethylene terephthalate) (PET), the most abundant polyester plastic in the world. Can also depolymerize the synthetic polyesters poly(epsilon-caprolactone) (PCL), poly(butylene succinate-co-adipate) (PBSA), poly(butylene succinate) (PBS), and poly(lactic acid) (PLA). The chain is Cutinase est2 from Thermobifida alba (Thermomonospora alba).